We begin with the raw amino-acid sequence, 501 residues long: NADH-quinone oxidoreductase subunit N (501 aa).

14 helical membrane passes run 4 to 24, 34 to 54, 80 to 100, 112 to 132, 134 to 154, 167 to 187, 207 to 227, 241 to 261, 278 to 298, 314 to 334, 335 to 355, 376 to 396, 409 to 429, and 463 to 483; these read HLPILIVIIPLFVAMAARLLV, FVLAAALAVLASGAVALAETL, LAGGLIVLVAFFGLAALVYAG, GSFYALFLLAKAGLLGMCATG, LFNLYVFLEISSLAAYALIAF, LIIGTAAACFYLLGVGYLYAM, PVVILALVFIVAGLGIKMALF, PAPVLAFMAAVMTKVSAYALY, LQVLGWMAAAGILFGSIMAIA, VGYIVLGLAVGNVLALYGALL, HVLSHALVKGGLFFIAGGVSW, MGAFVAAALSMIGLPPTLGFF, GAWVFVAVLVVSSLLTAVYFF, and PASMLVPILVLGIGVVVLGLF.

The protein belongs to the complex I subunit 2 family. In terms of assembly, NDH-1 is composed of 14 different subunits. Subunits NuoA, H, J, K, L, M, N constitute the membrane sector of the complex.

It is found in the cell membrane. It catalyses the reaction a quinone + NADH + 5 H(+)(in) = a quinol + NAD(+) + 4 H(+)(out). Functionally, NDH-1 shuttles electrons from NADH, via FMN and iron-sulfur (Fe-S) centers, to quinones in the respiratory chain. The immediate electron acceptor for the enzyme in this species is believed to be a menaquinone. Couples the redox reaction to proton translocation (for every two electrons transferred, four hydrogen ions are translocated across the cytoplasmic membrane), and thus conserves the redox energy in a proton gradient. The protein is NADH-quinone oxidoreductase subunit N of Desulforudis audaxviator (strain MP104C).